Consider the following 535-residue polypeptide: tRNA-2-methylthio-N(6)-dimethylallyladenosine synthase (535 aa).

The region spanning 24-139 (RTYEVRTFGC…LPRLLERARH (116 aa)) is the MTTase N-terminal domain. 6 residues coordinate [4Fe-4S] cluster: cysteine 33, cysteine 68, cysteine 102, cysteine 176, cysteine 180, and cysteine 183. Residues 162 to 392 (RDSSFSGWVS…IALQERISLE (231 aa)) form the Radical SAM core domain. The region spanning 395–465 (EKLIGRDVEL…PHYLIADAAG (71 aa)) is the TRAM domain. Residues 512 to 535 (RTREPLTSPGVGTMPLYDPTDGQR) are disordered.

Belongs to the methylthiotransferase family. MiaB subfamily. In terms of assembly, monomer. Requires [4Fe-4S] cluster as cofactor.

The protein localises to the cytoplasm. The catalysed reaction is N(6)-dimethylallyladenosine(37) in tRNA + (sulfur carrier)-SH + AH2 + 2 S-adenosyl-L-methionine = 2-methylsulfanyl-N(6)-dimethylallyladenosine(37) in tRNA + (sulfur carrier)-H + 5'-deoxyadenosine + L-methionine + A + S-adenosyl-L-homocysteine + 2 H(+). Its function is as follows. Catalyzes the methylthiolation of N6-(dimethylallyl)adenosine (i(6)A), leading to the formation of 2-methylthio-N6-(dimethylallyl)adenosine (ms(2)i(6)A) at position 37 in tRNAs that read codons beginning with uridine. This chain is tRNA-2-methylthio-N(6)-dimethylallyladenosine synthase, found in Leifsonia xyli subsp. xyli (strain CTCB07).